Here is a 511-residue protein sequence, read N- to C-terminus: Bifunctional purine biosynthesis protein PurH (511 aa).

The region spanning 1 to 145 (MKKRALVSVS…KNHQFVSVIV (145 aa)) is the MGS-like domain.

Belongs to the PurH family.

The enzyme catalyses (6R)-10-formyltetrahydrofolate + 5-amino-1-(5-phospho-beta-D-ribosyl)imidazole-4-carboxamide = 5-formamido-1-(5-phospho-D-ribosyl)imidazole-4-carboxamide + (6S)-5,6,7,8-tetrahydrofolate. It catalyses the reaction IMP + H2O = 5-formamido-1-(5-phospho-D-ribosyl)imidazole-4-carboxamide. Its pathway is purine metabolism; IMP biosynthesis via de novo pathway; 5-formamido-1-(5-phospho-D-ribosyl)imidazole-4-carboxamide from 5-amino-1-(5-phospho-D-ribosyl)imidazole-4-carboxamide (10-formyl THF route): step 1/1. It participates in purine metabolism; IMP biosynthesis via de novo pathway; IMP from 5-formamido-1-(5-phospho-D-ribosyl)imidazole-4-carboxamide: step 1/1. This is Bifunctional purine biosynthesis protein PurH from Bacillus cereus (strain G9842).